Consider the following 162-residue polypeptide: MVKIIGLDPGISKTGWAIISLNEKNNIEFLGGGTISTDGKLGTGERLHIIFEQLKKVISLYSPNEAAVEKIFVNKNPKSSLTLGYARGVVILALKITKLTMNEYDANYVKKSITGNGHADKDQIIFMVKQIVKNLSIKCHHVADALAVAICHAYTKGSCFVE.

Catalysis depends on residues D8, E69, and H141. 3 residues coordinate Mg(2+): D8, E69, and H141.

The protein belongs to the RuvC family. As to quaternary structure, homodimer which binds Holliday junction (HJ) DNA. The HJ becomes 2-fold symmetrical on binding to RuvC with unstacked arms; it has a different conformation from HJ DNA in complex with RuvA. In the full resolvosome a probable DNA-RuvA(4)-RuvB(12)-RuvC(2) complex forms which resolves the HJ. Mg(2+) is required as a cofactor.

Its subcellular location is the cytoplasm. The catalysed reaction is Endonucleolytic cleavage at a junction such as a reciprocal single-stranded crossover between two homologous DNA duplexes (Holliday junction).. In terms of biological role, the RuvA-RuvB-RuvC complex processes Holliday junction (HJ) DNA during genetic recombination and DNA repair. Endonuclease that resolves HJ intermediates. Cleaves cruciform DNA by making single-stranded nicks across the HJ at symmetrical positions within the homologous arms, yielding a 5'-phosphate and a 3'-hydroxyl group; requires a central core of homology in the junction. The consensus cleavage sequence is 5'-(A/T)TT(C/G)-3'. Cleavage occurs on the 3'-side of the TT dinucleotide at the point of strand exchange. HJ branch migration catalyzed by RuvA-RuvB allows RuvC to scan DNA until it finds its consensus sequence, where it cleaves and resolves the cruciform DNA. The protein is Crossover junction endodeoxyribonuclease RuvC of Wolbachia pipientis wMel.